A 162-amino-acid chain; its full sequence is Large ribosomal subunit protein uL15 (162 aa).

Residues 1–13 (MNLNELRDNEGSR) show a composition bias toward basic and acidic residues. The interval 1-39 (MNLNELRDNEGSRYRKKRLGRGIGSGKGKTSGRGVKGQK) is disordered. Gly residues predominate over residues 21–35 (RGIGSGKGKTSGRGV).

This sequence belongs to the universal ribosomal protein uL15 family. In terms of assembly, part of the 50S ribosomal subunit.

Its function is as follows. Binds to the 23S rRNA. In Gluconobacter oxydans (strain 621H) (Gluconobacter suboxydans), this protein is Large ribosomal subunit protein uL15.